We begin with the raw amino-acid sequence, 806 residues long: Acetyl-CoA decarbonylase/synthase complex subunit alpha 1 (806 aa).

Residues Cys73, Cys76, Cys77, Cys79, Cys84, and Cys94 each contribute to the [4Fe-4S] cluster site. His117 serves as a coordination point for CO. Positions 250, 278, and 323 each coordinate [Ni-4Fe-4S] cluster. 4Fe-4S ferredoxin-type domains follow at residues 406–436 (SDEQ…IPEA) and 445–475 (FSYL…LSVI). Positions 417, 420, 423, 427, 455, 458, 461, and 465 each coordinate [4Fe-4S] cluster. Positions 523, 552, and 587 each coordinate [Ni-4Fe-4S] cluster.

Belongs to the Ni-containing carbon monoxide dehydrogenase family. As to quaternary structure, heterotetramer of two alpha and two epsilon subunits. The ACDS complex is made up of alpha, epsilon, beta, gamma and delta subunits with a probable stoichiometry of (alpha(2)epsilon(2))(4)-beta(8)-(gamma(1)delta(1))(8). The cofactor is [4Fe-4S] cluster. [Ni-4Fe-4S] cluster is required as a cofactor.

It catalyses the reaction CO + 2 oxidized [2Fe-2S]-[ferredoxin] + H2O = 2 reduced [2Fe-2S]-[ferredoxin] + CO2 + 2 H(+). Its pathway is one-carbon metabolism; methanogenesis from acetate. Its function is as follows. Part of the ACDS complex that catalyzes the reversible cleavage of acetyl-CoA, allowing growth on acetate as sole source of carbon and energy. The alpha-epsilon subcomponent functions as a carbon monoxide dehydrogenase. In Methanosarcina mazei (strain ATCC BAA-159 / DSM 3647 / Goe1 / Go1 / JCM 11833 / OCM 88) (Methanosarcina frisia), this protein is Acetyl-CoA decarbonylase/synthase complex subunit alpha 1.